Here is a 375-residue protein sequence, read N- to C-terminus: DNA replication and repair protein RecF (375 aa).

Residue 30–37 participates in ATP binding; sequence GENAQGKT.

It belongs to the RecF family.

The protein resides in the cytoplasm. Functionally, the RecF protein is involved in DNA metabolism; it is required for DNA replication and normal SOS inducibility. RecF binds preferentially to single-stranded, linear DNA. It also seems to bind ATP. This Bacillus anthracis (strain A0248) protein is DNA replication and repair protein RecF.